The following is a 58-amino-acid chain: Large ribosomal subunit protein bL33 (58 aa).

The protein belongs to the bacterial ribosomal protein bL33 family.

The polypeptide is Large ribosomal subunit protein bL33 (Brachyspira hyodysenteriae (strain ATCC 49526 / WA1)).